A 447-amino-acid polypeptide reads, in one-letter code: Asparagine--tRNA ligase (447 aa).

The protein belongs to the class-II aminoacyl-tRNA synthetase family. In terms of assembly, homodimer.

The protein localises to the cytoplasm. It carries out the reaction tRNA(Asn) + L-asparagine + ATP = L-asparaginyl-tRNA(Asn) + AMP + diphosphate + H(+). In Herpetosiphon aurantiacus (strain ATCC 23779 / DSM 785 / 114-95), this protein is Asparagine--tRNA ligase.